Here is a 146-residue protein sequence, read N- to C-terminus: Deoxyuridine 5'-triphosphate nucleotidohydrolase (146 aa).

Residues Arg-66–Gly-68, Asn-79, Thr-83–Asp-85, and Lys-93 each bind substrate.

Belongs to the dUTPase family. The cofactor is Mg(2+).

The enzyme catalyses dUTP + H2O = dUMP + diphosphate + H(+). The protein operates within pyrimidine metabolism; dUMP biosynthesis; dUMP from dCTP (dUTP route): step 2/2. Its function is as follows. This enzyme is involved in nucleotide metabolism: it produces dUMP, the immediate precursor of thymidine nucleotides and it decreases the intracellular concentration of dUTP so that uracil cannot be incorporated into DNA. The sequence is that of Deoxyuridine 5'-triphosphate nucleotidohydrolase from Zymomonas mobilis subsp. mobilis (strain ATCC 31821 / ZM4 / CP4).